We begin with the raw amino-acid sequence, 527 residues long: Glutamate--cysteine ligase (527 aa).

The protein belongs to the glutamate--cysteine ligase type 1 family. Type 1 subfamily.

The enzyme catalyses L-cysteine + L-glutamate + ATP = gamma-L-glutamyl-L-cysteine + ADP + phosphate + H(+). Its pathway is sulfur metabolism; glutathione biosynthesis; glutathione from L-cysteine and L-glutamate: step 1/2. This is Glutamate--cysteine ligase from Pseudomonas aeruginosa (strain UCBPP-PA14).